Consider the following 89-residue polypeptide: MRPWRCVSMAKAPAAPSSTQPDPVSYEAALEELEQLVGRIESGQLPLDQMLAGYQRGAVLLNFCRARLEAVQDQIKVLDEGALQPWVQE.

The tract at residues Met1–Pro23 is disordered.

The protein belongs to the XseB family. As to quaternary structure, heterooligomer composed of large and small subunits.

The protein resides in the cytoplasm. The catalysed reaction is Exonucleolytic cleavage in either 5'- to 3'- or 3'- to 5'-direction to yield nucleoside 5'-phosphates.. In terms of biological role, bidirectionally degrades single-stranded DNA into large acid-insoluble oligonucleotides, which are then degraded further into small acid-soluble oligonucleotides. The protein is Exodeoxyribonuclease 7 small subunit of Acidovorax sp. (strain JS42).